The chain runs to 146 residues: DNA-binding protein Rv2175c (146 aa).

The tract at residues 1–27 (MPGRAPGSTLARVGSIPAGDDVLDPDE) is disordered. Position 9 is a phosphothreonine (T9).

As to quaternary structure, monomer in solution. May form homodimers. Interacts with phosphorylated PknL. In terms of processing, phosphorylated by PknL. Phosphorylation negatively regulates DNA-binding activity.

In terms of biological role, binds DNA at low salt concentrations. The polypeptide is DNA-binding protein Rv2175c (Mycobacterium tuberculosis (strain ATCC 25618 / H37Rv)).